A 471-amino-acid chain; its full sequence is BPI fold-containing family B member 1 (471 aa).

Residues 1–18 (MTNPWIVSLLLGATLVQA) form the signal peptide. N-linked (GlcNAc...) asparagine glycans are attached at residues Asn150, Asn157, Asn260, and Asn397. Cys154 and Cys197 are oxidised to a cystine.

The protein belongs to the BPI/LBP/Plunc superfamily. Plunc family.

It is found in the secreted. In terms of biological role, may play a role in innate immunity in mouth, nose and lungs. Binds bacterial lipopolysaccharide (LPS) and modulates the cellular responses to LPS. This is BPI fold-containing family B member 1 (Bpifb1) from Rattus norvegicus (Rat).